The following is a 256-amino-acid chain: MAVGKNKRLSKGKKGLKKKTLDPFTRKDWYQIKAPSSFQIRDVGKTLVNRTTGLKNANDSLKGRIIEVSLADLQKDEDHAFRKVKLRVDEVQGKNCLTNFHGLDFTSDKLRSLVRKWQSLIEANITVKTTDDYLLRLFAIAFTKRRPNQIKKTTYAASSQIRAIRKKMTEIIQREASTCTLTQLTAKLIPEVIGREIEKATQGIYPLQNVHIRKVKLLKAPKFDLGALLNLHGESNTDEQGQKVEREFKEKVLEQV.

N-acetylalanine; partial is present on Ala2.

This sequence belongs to the eukaryotic ribosomal protein eS1 family. As to quaternary structure, component of the small ribosomal subunit. Mature ribosomes consist of a small (40S) and a large (60S) subunit. The 40S subunit contains about 33 different proteins and 1 molecule of RNA (18S). The 60S subunit contains about 49 different proteins and 3 molecules of RNA (25S, 5.8S and 5S).

The protein localises to the cytoplasm. This chain is Small ribosomal subunit protein eS1 (rps1), found in Sclerotinia sclerotiorum (strain ATCC 18683 / 1980 / Ss-1) (White mold).